Reading from the N-terminus, the 529-residue chain is Protein PAT1 homolog 2 (529 aa).

The disordered stretch occupies residues 153 to 183 (QILQQQQRWRRRRSPTARSVPAQKPWSREPA).

This sequence belongs to the PAT1 family. In terms of assembly, interacts with LSM1.

The protein resides in the cytoplasm. It localises to the nucleus. In terms of biological role, RNA-binding protein that acts as a translational repressor. This Mus musculus (Mouse) protein is Protein PAT1 homolog 2 (Patl2).